We begin with the raw amino-acid sequence, 517 residues long: 2-isopropylmalate synthase (517 aa).

The Pyruvate carboxyltransferase domain occupies 6-267 (IIVFDTTLRD…YTTINTPEIY (262 aa)). 4 residues coordinate Mn(2+): D15, H201, H203, and N237. Residues 393-517 (DLIGLQISDC…RLSKSSEHQV (125 aa)) are regulatory domain.

Belongs to the alpha-IPM synthase/homocitrate synthase family. LeuA type 1 subfamily. In terms of assembly, homodimer. Requires Mn(2+) as cofactor.

Its subcellular location is the cytoplasm. The enzyme catalyses 3-methyl-2-oxobutanoate + acetyl-CoA + H2O = (2S)-2-isopropylmalate + CoA + H(+). The protein operates within amino-acid biosynthesis; L-leucine biosynthesis; L-leucine from 3-methyl-2-oxobutanoate: step 1/4. Catalyzes the condensation of the acetyl group of acetyl-CoA with 3-methyl-2-oxobutanoate (2-ketoisovalerate) to form 3-carboxy-3-hydroxy-4-methylpentanoate (2-isopropylmalate). The protein is 2-isopropylmalate synthase of Aliarcobacter butzleri (strain RM4018) (Arcobacter butzleri).